The following is a 355-amino-acid chain: Putative inositol monophosphatase 3 (355 aa).

The chain crosses the membrane as a helical span at residues 16–36; it reads LPATIVAILLTFVLVYFLNFH. Mg(2+) is bound by residues glutamate 127, aspartate 167, leucine 169, aspartate 170, and aspartate 292. Residue glutamate 127 coordinates substrate. Substrate is bound by residues 169–172 and aspartate 292; that span reads LDAT.

It belongs to the inositol monophosphatase superfamily. Mg(2+) is required as a cofactor.

Its subcellular location is the membrane. The catalysed reaction is a myo-inositol phosphate + H2O = myo-inositol + phosphate. It participates in polyol metabolism; myo-inositol biosynthesis; myo-inositol from D-glucose 6-phosphate: step 2/2. This Drosophila melanogaster (Fruit fly) protein is Putative inositol monophosphatase 3.